Here is a 443-residue protein sequence, read N- to C-terminus: Probable nitrate/nitrite antiporter NarK2 (443 aa).

The next 12 membrane-spanning stretches (helical) occupy residues 32 to 52 (ITTF…ALVV), 66 to 86 (LFWL…IWTF), 95 to 115 (HLVT…GFAV), 123 to 143 (WVLL…SGYM), 172 to 192 (IVQF…LLGG), 210 to 230 (NATF…WVYL), 256 to 276 (SLYI…PLLI), 292 to 312 (YAFL…PISD), 314 to 334 (LGGA…ALLV), 346 to 366 (FPMF…GNAS), 383 to 403 (VIGW…TLAA), and 409 to 429 (TGGF…NFFL).

The protein belongs to the major facilitator superfamily. Nitrate/nitrite porter (TC 2.A.1.8) family.

It is found in the cell membrane. It catalyses the reaction nitrate(in) + nitrite(out) = nitrate(out) + nitrite(in). Probable nitrate/nitrite antiporter that may be involved in nitrate import and nitrite export during anaerobic growth. The sequence is that of Probable nitrate/nitrite antiporter NarK2 from Thermus thermophilus.